The chain runs to 523 residues: Maturase K (523 aa).

The protein belongs to the intron maturase 2 family. MatK subfamily.

The protein localises to the plastid. Its subcellular location is the chloroplast. Its function is as follows. Usually encoded in the trnK tRNA gene intron. Probably assists in splicing its own and other chloroplast group II introns. This Asphodeline lutea (King's spear) protein is Maturase K.